The chain runs to 455 residues: Ribosomal protein uS12 methylthiotransferase RimO (455 aa).

Positions 10 to 120 constitute an MTTase N-terminal domain; sequence PKVGMVSLGC…VVEAVHDAAP (111 aa). 6 residues coordinate [4Fe-4S] cluster: Cys19, Cys55, Cys84, Cys151, Cys155, and Cys158. One can recognise a Radical SAM core domain in the interval 137–380; that stretch reads LTPRHYSYLK…MAKTAAISAA (244 aa). In terms of domain architecture, TRAM spans 383-455; sequence EAKIGRTLPV…DEHDLFGVVT (73 aa).

The protein belongs to the methylthiotransferase family. RimO subfamily. [4Fe-4S] cluster is required as a cofactor.

The protein resides in the cytoplasm. The catalysed reaction is L-aspartate(89)-[ribosomal protein uS12]-hydrogen + (sulfur carrier)-SH + AH2 + 2 S-adenosyl-L-methionine = 3-methylsulfanyl-L-aspartate(89)-[ribosomal protein uS12]-hydrogen + (sulfur carrier)-H + 5'-deoxyadenosine + L-methionine + A + S-adenosyl-L-homocysteine + 2 H(+). Catalyzes the methylthiolation of an aspartic acid residue of ribosomal protein uS12. In Sphingopyxis alaskensis (strain DSM 13593 / LMG 18877 / RB2256) (Sphingomonas alaskensis), this protein is Ribosomal protein uS12 methylthiotransferase RimO.